Here is a 352-residue protein sequence, read N- to C-terminus: MINQRFSILVLLLILLTFSLGFLKEEAKGMEIPSLKEVYKDYFTIGAAVSHLNIYHYENLLKKHFNSLTPENQMKWEVIHPKPYVYDFGPADEIVDFAMKNGMKVRGHTLVWHNQTPGWVYAGTKDEILARLKEHIKEVVGHYKGKVYAWDVVNEALSDNPNEFLRRAPWYDICGEEVIEKAFIWAHEVDPDAKLFYNDYNLEDPIKREKAYKLVKKLKDKGVPIHGIGIQGHWTLAWPTPKMLEDSIKRFAELGVEVQVTEFDISIYYDRNENNNFKVPPEDRLERQAQLYKEAFEILRKYKGIVTGVTFWGVADDYTWLYFWPVRGREDYPLLFDKNHNPKKAFWEIVKF.

A signal peptide spans Met1–Leu23. A GH10 domain is found at Gly29–Phe352. Catalysis depends on Glu155, which acts as the Proton donor. Glu262 serves as the catalytic Nucleophile.

The protein belongs to the glycosyl hydrolase 10 (cellulase F) family.

The protein localises to the secreted. It catalyses the reaction Endohydrolysis of (1-&gt;4)-beta-D-xylosidic linkages in xylans.. The protein operates within glycan degradation; xylan degradation. The protein is Beta-1,4-xylanase (xynA) of Dictyoglomus thermophilum.